The following is a 241-amino-acid chain: Protein unc-119 homolog B-B (241 aa).

The disordered stretch occupies residues Met1–Ser46. Tetradecanoate is bound at residue Tyr132.

The protein belongs to the PDE6D/unc-119 family.

It is found in the cell projection. Its subcellular location is the cilium. Myristoyl-binding protein that acts as a cargo adapter: specifically binds the myristoyl moiety of a subset of N-terminally myristoylated proteins and is required for their localization. Plays a key role in localization of proteins to the primary cilium membrane. This chain is Protein unc-119 homolog B-B (unc119b-b), found in Xenopus laevis (African clawed frog).